Reading from the N-terminus, the 107-residue chain is MTTLSPIEGMLQQLRGLAQTAAGTSSQAAAPAASGGFAGELQRSLSRINATQERAYGLSEAFELGKPGVALNDVMIELQKANVSFQTGVQVRNRLVQAYQEMMNMPV.

The protein belongs to the FliE family.

It is found in the bacterial flagellum basal body. This is Flagellar hook-basal body complex protein FliE from Cupriavidus pinatubonensis (strain JMP 134 / LMG 1197) (Cupriavidus necator (strain JMP 134)).